We begin with the raw amino-acid sequence, 230 residues long: Putative transcription factor bHLH107 (230 aa).

A bHLH domain is found at alanine 44–leucine 93.

As to quaternary structure, homodimer.

It localises to the nucleus. The chain is Putative transcription factor bHLH107 (BHLH107) from Arabidopsis thaliana (Mouse-ear cress).